The chain runs to 586 residues: CTP synthase (586 aa).

Residues 1-278 (MRKHPQTATK…DAFVVRRLNL (278 aa)) form an amidoligase domain region. Ser20 contacts CTP. UTP is bound at residue Ser20. Residues 21–26 (SLGKGL) and Asp78 contribute to the ATP site. Positions 78 and 152 each coordinate Mg(2+). CTP is bound by residues 159–161 (DIE), 199–204 (KTKPTQ), and Lys235. UTP is bound by residues 199-204 (KTKPTQ) and Lys235. One can recognise a Glutamine amidotransferase type-1 domain in the interval 303-551 (RIALVGKYVE…VGAAIDYKAG (249 aa)). Gly366 serves as a coordination point for L-glutamine. Residue Cys393 is the Nucleophile; for glutamine hydrolysis of the active site. Residues 394-397 (LGLQ), Glu416, and Arg477 each bind L-glutamine. Residues His524 and Glu526 contribute to the active site. Positions 560 to 586 (EIPEHTPNGSSHRDGVGQPLPEPASRG) are disordered.

The protein belongs to the CTP synthase family. Homotetramer.

The catalysed reaction is UTP + L-glutamine + ATP + H2O = CTP + L-glutamate + ADP + phosphate + 2 H(+). It carries out the reaction L-glutamine + H2O = L-glutamate + NH4(+). The enzyme catalyses UTP + NH4(+) + ATP = CTP + ADP + phosphate + 2 H(+). It functions in the pathway pyrimidine metabolism; CTP biosynthesis via de novo pathway; CTP from UDP: step 2/2. With respect to regulation, allosterically activated by GTP, when glutamine is the substrate; GTP has no effect on the reaction when ammonia is the substrate. The allosteric effector GTP functions by stabilizing the protein conformation that binds the tetrahedral intermediate(s) formed during glutamine hydrolysis. Inhibited by the product CTP, via allosteric rather than competitive inhibition. In terms of biological role, catalyzes the ATP-dependent amination of UTP to CTP with either L-glutamine or ammonia as the source of nitrogen. Regulates intracellular CTP levels through interactions with the four ribonucleotide triphosphates. The protein is CTP synthase of Mycobacterium tuberculosis (strain CDC 1551 / Oshkosh).